The sequence spans 172 residues: Adenine phosphoribosyltransferase (172 aa).

The protein belongs to the purine/pyrimidine phosphoribosyltransferase family. Homodimer.

It localises to the cytoplasm. The enzyme catalyses AMP + diphosphate = 5-phospho-alpha-D-ribose 1-diphosphate + adenine. Its pathway is purine metabolism; AMP biosynthesis via salvage pathway; AMP from adenine: step 1/1. Catalyzes a salvage reaction resulting in the formation of AMP, that is energically less costly than de novo synthesis. This chain is Adenine phosphoribosyltransferase, found in Prochlorococcus marinus (strain NATL1A).